The following is a 408-amino-acid chain: Serine/threonine-protein kinase ATG1t (408 aa).

The Protein kinase domain occupies 7-272 (YIAKSKLSES…GRIKNSRVWV (266 aa)). ATP-binding positions include 13–21 (LSESLTSTV) and lysine 36. Residue aspartate 129 is the Proton acceptor of the active site.

The protein belongs to the protein kinase superfamily. Ser/Thr protein kinase family.

It localises to the cytoplasmic vesicle. The protein localises to the autophagosome. Functionally, serine/threonine protein kinase involved in autophagy. The ATG1-ATG13 protein kinase complex regulates downstream events required for autophagosome enclosure and/or vacuolar delivery. This chain is Serine/threonine-protein kinase ATG1t, found in Arabidopsis thaliana (Mouse-ear cress).